The following is a 239-amino-acid chain: O-antigen export system ATP-binding protein RfbE (239 aa).

One can recognise an ABC transporter domain in the interval 28-239 (VRVSTGGRIG…LIYEESMDIL (212 aa)). Position 66–73 (66–73 (GHNGAGKS)) interacts with ATP.

This sequence belongs to the ABC transporter superfamily.

It localises to the cell inner membrane. In terms of biological role, may form an ATP-driven O-antigen export apparatus, in association with RfbD. This chain is O-antigen export system ATP-binding protein RfbE (rfbE), found in Yersinia enterocolitica.